A 376-amino-acid chain; its full sequence is N-acetyldiaminopimelate deacetylase (376 aa).

The active site involves D69. The active-site Proton acceptor is the E128.

The protein belongs to the peptidase M20A family. N-acetyldiaminopimelate deacetylase subfamily.

The enzyme catalyses N-acetyl-(2S,6S)-2,6-diaminopimelate + H2O = (2S,6S)-2,6-diaminopimelate + acetate. It functions in the pathway amino-acid biosynthesis; L-lysine biosynthesis via DAP pathway; LL-2,6-diaminopimelate from (S)-tetrahydrodipicolinate (acetylase route): step 3/3. Its function is as follows. Catalyzes the conversion of N-acetyl-diaminopimelate to diaminopimelate and acetate. This chain is N-acetyldiaminopimelate deacetylase, found in Bacillus mycoides (strain KBAB4) (Bacillus weihenstephanensis).